The following is a 569-amino-acid chain: Urease subunit beta (569 aa).

The 439-residue stretch at 131–569 folds into the Urease domain; that stretch reads GGIDTHIHFI…VSLAQLFSIF (439 aa). Ni(2+)-binding residues include His-136, His-138, and Lys-219. N6-carboxylysine is present on Lys-219. Residue His-221 coordinates substrate. Ni(2+) is bound by residues His-248 and His-274. His-322 serves as the catalytic Proton donor. Asp-362 contributes to the Ni(2+) binding site.

It belongs to the metallo-dependent hydrolases superfamily. Urease alpha subunit family. In terms of assembly, heterohexamer of 3 UreA (alpha) and 3 UreB (beta) subunits. Four heterohexamers assemble to form a 16 nm dodecameric complex. Ni cation serves as cofactor. In terms of processing, carboxylation allows a single lysine to coordinate two nickel ions.

Its subcellular location is the cytoplasm. The enzyme catalyses urea + 2 H2O + H(+) = hydrogencarbonate + 2 NH4(+). The protein operates within nitrogen metabolism; urea degradation; CO(2) and NH(3) from urea (urease route): step 1/1. In terms of biological role, ammonia produced by ureolysis increases the gastric pH thereby providing an environment permissive for colonization of the stomach. The protein is Urease subunit beta of Helicobacter pylori (strain J99 / ATCC 700824) (Campylobacter pylori J99).